The sequence spans 113 residues: Type III endosome membrane protein TEMP (113 aa).

The interval 1 to 22 (MNETNKTLVGPSELPTASAVAP) is disordered. Topologically, residues 1-29 (MNETNKTLVGPSELPTASAVAPGPGTGAR) are extracellular. Asparagine 5 is a glycosylation site (N-linked (GlcNAc...) asparagine). The chain crosses the membrane as a helical; Signal-anchor for type III membrane protein span at residues 30 to 50 (AWPVLVGFVLGAVVLSLLIAL). Residues 51-113 (AAKCHLCRRY…TEGSRDHFSL (63 aa)) lie on the Cytoplasmic side of the membrane. A disordered region spans residues 66-113 (HRPLPETGRGGRPQVAEDEDDDGFIEDNYIQPGTGELGTEGSRDHFSL). Residues 81-90 (AEDEDDDGFI) are compositionally biased toward acidic residues.

It localises to the membrane. The protein resides in the early endosome. The protein localises to the recycling endosome. Its subcellular location is the cell membrane. In terms of biological role, may be involved in membrane trafficking between endosomes and plasma membrane. The chain is Type III endosome membrane protein TEMP (C1orf210) from Homo sapiens (Human).